A 382-amino-acid chain; its full sequence is Lipid-A-disaccharide synthase (382 aa).

It belongs to the LpxB family.

The catalysed reaction is a lipid X + a UDP-2-N,3-O-bis[(3R)-3-hydroxyacyl]-alpha-D-glucosamine = a lipid A disaccharide + UDP + H(+). It participates in bacterial outer membrane biogenesis; LPS lipid A biosynthesis. Functionally, condensation of UDP-2,3-diacylglucosamine and 2,3-diacylglucosamine-1-phosphate to form lipid A disaccharide, a precursor of lipid A, a phosphorylated glycolipid that anchors the lipopolysaccharide to the outer membrane of the cell. This is Lipid-A-disaccharide synthase from Alkalilimnicola ehrlichii (strain ATCC BAA-1101 / DSM 17681 / MLHE-1).